Reading from the N-terminus, the 756-residue chain is Multicystatin (756 aa).

Cystatin domains lie at 3-96 (IVGG…DDST), 97-191 (MPGG…DDIA), 192-285 (KLGG…DDSA), 286-380 (KTGG…DSAK), 381-474 (KLGG…DDSA), 475-568 (KLGG…DDSA), 569-662 (IIGG…DDSA), and 663-756 (KPGG…DATK). 8 short sequence motifs (secondary area of contact) span residues 48-52 (QIVAG), 142-146 (QVVAG), 237-241 (QVVAG), 331-335 (QLVSG), 426-430 (QVVAG), 520-524 (QLVAG), 614-618 (QLVAG), and 708-712 (QVVAG).

This sequence belongs to the cystatin family. Phytocystatin subfamily. Expressed abundantly in tuber and leaf.

Functionally, probably has a role in the plant's defense system. The chain is Multicystatin from Solanum tuberosum (Potato).